A 507-amino-acid chain; its full sequence is Maturase K (507 aa).

This sequence belongs to the intron maturase 2 family. MatK subfamily.

Its subcellular location is the plastid. The protein localises to the chloroplast. In terms of biological role, usually encoded in the trnK tRNA gene intron. Probably assists in splicing its own and other chloroplast group II introns. The polypeptide is Maturase K (Lyonia lucida (Fetterbush)).